The following is a 74-amino-acid chain: MDMVSLKFIGTGLMAIGMYGAALGVSNIFSSLLSSIARNPSATENLQRMALIGAGLAEAMGLFSFVIAMLLIFS.

A run of 2 helical transmembrane segments spans residues 8 to 28 (FIGT…VSNI) and 52 to 72 (IGAG…MLLI).

The protein belongs to the ATPase C chain family. In terms of assembly, F-type ATPases have 2 components, F(1) - the catalytic core - and F(0) - the membrane proton channel. F(1) has five subunits: alpha(3), beta(3), gamma(1), delta(1), epsilon(1). F(0) has three main subunits: a(1), b(2) and c(10-14). The alpha and beta chains form an alternating ring which encloses part of the gamma chain. F(1) is attached to F(0) by a central stalk formed by the gamma and epsilon chains, while a peripheral stalk is formed by the delta and b chains.

The protein resides in the cell inner membrane. Functionally, f(1)F(0) ATP synthase produces ATP from ADP in the presence of a proton or sodium gradient. F-type ATPases consist of two structural domains, F(1) containing the extramembraneous catalytic core and F(0) containing the membrane proton channel, linked together by a central stalk and a peripheral stalk. During catalysis, ATP synthesis in the catalytic domain of F(1) is coupled via a rotary mechanism of the central stalk subunits to proton translocation. In terms of biological role, key component of the F(0) channel; it plays a direct role in translocation across the membrane. A homomeric c-ring of between 10-14 subunits forms the central stalk rotor element with the F(1) delta and epsilon subunits. The chain is ATP synthase subunit c from Rickettsia conorii (strain ATCC VR-613 / Malish 7).